The sequence spans 71 residues: Small, acid-soluble spore protein I (71 aa).

It belongs to the SspI family.

The protein localises to the spore core. This Geobacillus sp. (strain WCH70) protein is Small, acid-soluble spore protein I.